Consider the following 391-residue polypeptide: Phosphoglycerate kinase (391 aa).

Residues 21–23 (DLN), R36, 59–62 (HLGR), R113, and R146 contribute to the substrate site. Residues K197, E319, and 345–348 (GGDT) each bind ATP.

The protein belongs to the phosphoglycerate kinase family. In terms of assembly, monomer.

The protein resides in the cytoplasm. The catalysed reaction is (2R)-3-phosphoglycerate + ATP = (2R)-3-phospho-glyceroyl phosphate + ADP. It participates in carbohydrate degradation; glycolysis; pyruvate from D-glyceraldehyde 3-phosphate: step 2/5. The sequence is that of Phosphoglycerate kinase from Shewanella woodyi (strain ATCC 51908 / MS32).